The chain runs to 357 residues: Alanine racemase (357 aa).

Residue K35 is the Proton acceptor; specific for D-alanine of the active site. N6-(pyridoxal phosphate)lysine is present on K35. Residue R130 coordinates substrate. Y253 (proton acceptor; specific for L-alanine) is an active-site residue. M302 lines the substrate pocket.

It belongs to the alanine racemase family. Pyridoxal 5'-phosphate is required as a cofactor.

It carries out the reaction L-alanine = D-alanine. It participates in amino-acid biosynthesis; D-alanine biosynthesis; D-alanine from L-alanine: step 1/1. In terms of biological role, catalyzes the interconversion of L-alanine and D-alanine. May also act on other amino acids. This chain is Alanine racemase (alr), found in Wigglesworthia glossinidia brevipalpis.